We begin with the raw amino-acid sequence, 283 residues long: Coiled-coil domain-containing protein 42 homolog (283 aa).

Coiled coils occupy residues 31–139 (ATQL…LQRY) and 174–204 (QDLRSRDRNNQTEIERVRREMARYKEAHRVS).

This sequence belongs to the CFAP73 family.

This chain is Coiled-coil domain-containing protein 42 homolog, found in Monosiga brevicollis (Choanoflagellate).